The sequence spans 122 residues: MIQQESRLKVADNSGAREILTIKVLGGSGRKFANIGDVIVATVKQATPGGAVKKGDVVKAVIVRTKTGARRSDGSYIKFDDNAAVIIRDDKTPRGTRIFGPVARELREGGYMRIVSLAPEVL.

The protein belongs to the universal ribosomal protein uL14 family. As to quaternary structure, part of the 50S ribosomal subunit. Forms a cluster with proteins L3 and L19. In the 70S ribosome, L14 and L19 interact and together make contacts with the 16S rRNA in bridges B5 and B8.

Functionally, binds to 23S rRNA. Forms part of two intersubunit bridges in the 70S ribosome. The polypeptide is Large ribosomal subunit protein uL14 (Streptococcus thermophilus (strain CNRZ 1066)).